Consider the following 526-residue polypeptide: MPASFLASLRAWIASSTIGQRILLALALGLLLITARVISKSKGTMPPGPRGLPLLGNIFQLPKLPWYRFTEWKEEFGPIFSLNFAGTPVVVLNSHEVVGDLLERKSTIYSDRPRFIMAGEILTGGMLIVFTGYGKVWRKLRRAGQEGLNVRASEKYQPLQESEARLLTTNMLREPAEWDAHLQRAAASSIASAVYAWPPLTKSDDGLVHRIDELMRRLVMAGLPGRYLVEIFPIMKHLPTWMAKWKREGLEWHRRDTEMFEGFYDNVARFMASGKYKPSLTAGLIERQEKNGLSKKEVSWLAGTMIGAGAETTAASLSVFMLAMTLYPDVMRKAQAEIDALVGRERMPTFADRPHLPYVCALVKEVLRWRPVGPVGVPRRTSEDDWYKGYFIPKGTLVIANVWAMNRDPAIYPDYDEFRPDRFLDASGNEIDIAGTHGQGHVTYGFGRRICIGMHVANQALFIDIAALLWAFNIEAPTGPDGNPILPSRTDFVDEGLVFRPAAFRCKVTPRIDDVATMLATLEKNA.

3 consecutive transmembrane segments (helical) span residues 13–33 (IASS…LLLI), 115–135 (FIMA…GYGK), and 306–326 (IGAG…AMTL). Cysteine 451 provides a ligand contact to heme.

It belongs to the cytochrome P450 family. Heme is required as a cofactor.

It localises to the membrane. The protein operates within secondary metabolite biosynthesis. Functionally, cytochrome P450 monooxygenase that is able to use delta(6)-protoilludene as a substrate to produce delta(6)-protoilludene-8-ol. The polypeptide is Cytochrome P450 monooxygenase 58 (Postia placenta (strain ATCC 44394 / Madison 698-R) (Brown rot fungus)).